Here is a 469-residue protein sequence, read N- to C-terminus: Actin-related protein 4 (469 aa).

The disordered stretch occupies residues 104 to 136 (PERSTPPSKKGINISDDGDVPMEDDGNNNEDAT). Positions 119 to 136 (DDGDVPMEDDGNNNEDAT) are enriched in acidic residues.

It belongs to the actin family. ARP4 subfamily. In terms of assembly, component of the NuA4 histone acetyltransferase complex, of the INO80 chromatin remodeling complex, and of the SWR1 chromatin remodeling complex.

Its subcellular location is the nucleus. In terms of biological role, chromatin interaction component of the NuA4 histone acetyltransferase complex which is involved in transcriptional activation of selected genes principally by acetylation of nucleosomal histone H4 and H2A. The NuA4 complex is also involved in DNA repair. Is required for NuA4 complex integrity. Component of the SWR1 complex which mediates the ATP-dependent exchange of histone H2A for the H2A variant H2A.Z leading to transcriptional regulation of selected genes by chromatin remodeling. Component of the INO80 complex which remodels chromatin by shifting nucleosomes and is involved in DNA repair. This chain is Actin-related protein 4 (arp-4), found in Neurospora crassa (strain ATCC 24698 / 74-OR23-1A / CBS 708.71 / DSM 1257 / FGSC 987).